Consider the following 357-residue polypeptide: Glutamine synthetase cytosolic isozyme (357 aa).

The region spanning 20–100 (VIAEYIWIGG…VICDAYSPNG (81 aa)) is the GS beta-grasp domain. The GS catalytic domain maps to 107–357 (KRAAAAKIFN…IAETTILWKP (251 aa)).

The protein belongs to the glutamine synthetase family. In terms of assembly, homooctamer.

The protein localises to the cytoplasm. It carries out the reaction L-glutamate + NH4(+) + ATP = L-glutamine + ADP + phosphate + H(+). The protein is Glutamine synthetase cytosolic isozyme of Pinus sylvestris (Scotch pine).